The chain runs to 306 residues: Cilia- and flagella-associated protein 73 (306 aa).

Coiled coils occupy residues 49–139 (LQAQ…QRLE) and 197–231 (QSEKQDEMLNLNQQRTQLVEQLEAAREHRQQWESK).

The protein belongs to the CFAP73 family.

It localises to the cytoplasm. The protein localises to the cytoskeleton. The protein resides in the cilium axoneme. In terms of biological role, may play a role in ciliary/flagellar motility by regulating the assembly and the activity of axonemal inner dynein arm. In Mus musculus (Mouse), this protein is Cilia- and flagella-associated protein 73.